We begin with the raw amino-acid sequence, 413 residues long: 1-deoxy-D-xylulose 5-phosphate reductoisomerase (413 aa).

Threonine 13, glycine 14, serine 15, isoleucine 16, arginine 40, asparagine 41, and asparagine 127 together coordinate NADPH. Residue lysine 128 coordinates 1-deoxy-D-xylulose 5-phosphate. Glutamate 129 is a binding site for NADPH. Aspartate 153 contacts Mn(2+). Residues serine 154, glutamate 155, serine 184, and histidine 207 each contribute to the 1-deoxy-D-xylulose 5-phosphate site. Mn(2+) is bound at residue glutamate 155. Glycine 213 contacts NADPH. Residues serine 220, asparagine 225, lysine 226, and glutamate 229 each coordinate 1-deoxy-D-xylulose 5-phosphate. Glutamate 229 serves as a coordination point for Mn(2+).

This sequence belongs to the DXR family. Mg(2+) serves as cofactor. Mn(2+) is required as a cofactor.

It catalyses the reaction 2-C-methyl-D-erythritol 4-phosphate + NADP(+) = 1-deoxy-D-xylulose 5-phosphate + NADPH + H(+). It participates in isoprenoid biosynthesis; isopentenyl diphosphate biosynthesis via DXP pathway; isopentenyl diphosphate from 1-deoxy-D-xylulose 5-phosphate: step 1/6. In terms of biological role, catalyzes the NADPH-dependent rearrangement and reduction of 1-deoxy-D-xylulose-5-phosphate (DXP) to 2-C-methyl-D-erythritol 4-phosphate (MEP). The chain is 1-deoxy-D-xylulose 5-phosphate reductoisomerase from Nitrosomonas europaea (strain ATCC 19718 / CIP 103999 / KCTC 2705 / NBRC 14298).